The chain runs to 199 residues: Ribonuclease HII (199 aa).

One can recognise an RNase H type-2 domain in the interval Gln-9–Leu-198. Positions 15, 16, and 107 each coordinate a divalent metal cation.

Belongs to the RNase HII family. Mn(2+) is required as a cofactor. Requires Mg(2+) as cofactor.

The protein resides in the cytoplasm. It catalyses the reaction Endonucleolytic cleavage to 5'-phosphomonoester.. Endonuclease that specifically degrades the RNA of RNA-DNA hybrids. The polypeptide is Ribonuclease HII (Saccharophagus degradans (strain 2-40 / ATCC 43961 / DSM 17024)).